Here is a 545-residue protein sequence, read N- to C-terminus: Glucose-6-phosphate isomerase (545 aa).

Glu351 serves as the catalytic Proton donor. Active-site residues include His382 and Lys510.

Belongs to the GPI family.

It is found in the cytoplasm. It catalyses the reaction alpha-D-glucose 6-phosphate = beta-D-fructose 6-phosphate. Its pathway is carbohydrate biosynthesis; gluconeogenesis. It functions in the pathway carbohydrate degradation; glycolysis; D-glyceraldehyde 3-phosphate and glycerone phosphate from D-glucose: step 2/4. Its function is as follows. Catalyzes the reversible isomerization of glucose-6-phosphate to fructose-6-phosphate. This is Glucose-6-phosphate isomerase from Helicobacter pylori (strain HPAG1).